A 201-amino-acid polypeptide reads, in one-letter code: ADKAKAAEEAKKKQDDIDRKKAEVRKRLEEQSLKKQKKGFMTPERKKKLRLLLRKKAAEELKKEQERKAGERRKIIDQRCGQPKNLDGANEEQLRAIIKEYFDHTAQIESDKYDVELEIIRKDYEINELNIQVNDLRGKFIKPTLKKVSKYENKFAKLQKKAAEFNFRNQLKTVKKKEFELEDDKGATEGDGPAAEEVAAE.

Residue alanine 1 is modified to N-acetylalanine. Positions 1–33 (ADKAKAAEEAKKKQDDIDRKKAEVRKRLEEQSL) are enriched in basic and acidic residues. The segment at 1–45 (ADKAKAAEEAKKKQDDIDRKKAEVRKRLEEQSLKKQKKGFMTPER) is disordered. The segment at 108–117 (IESDKYDVEL) is troponin T-interaction. The interval 135 to 148 (DLRGKFIKPTLKKV) is actin-binding. Residues lysine 142 and lysine 146 each carry the N6,N6,N6-trimethyllysine modification. Positions 182–201 (EDDKGATEGDGPAAEEVAAE) are disordered.

The protein belongs to the troponin I family.

Functionally, troponin I is the actomyosin ATPase inhibitory subunit present in the thin filament regulatory complex. The polypeptide is Troponin I (Astacus leptodactylus (Turkish narrow-clawed crayfish)).